Here is a 505-residue protein sequence, read N- to C-terminus: MSERETRGANEAIDFNDELRNRREKLAALRQQGVAFPNDFRRDHTSDQLHEEFDAKDNQELESLNIEVSVAGRMMTRRIMGKASFVTLQDVGGRIQLYVARDSLPEGVYNDQFKKWDLGDIIGARGTLFKTQTGELSIHCTELRLLTKALRPLPDKFHGLQDQEVRYRQRYLDLIANDKSRQTFVVRSKILAAIRQFMVARGFMEVETPMMQVIPGGASARPFITHHNALDLDMYLRIAPELYLKRLVVGGFERVFEINRNFRNEGISVRHNPEFTMMELYMAYADYHDLIELTESLFRTLAQEVLGTTKVTYGEHVFDFGKPFEKLTMREAIKKYRPETDMADLDNFDAAKALAESIGITVEKSWGLGRIVTEIFDEVAEAHLIQPTFITEYPAEVSPLARRNDVNPEITDRFEFFIGGREIGNGFSELNDAEDQAERFQEQVNAKAAGDDEAMFYDEDYVTALEYGLPPTAGLGIGIDRMIMLFTNSHTIRDVILFPAMRPQK.

An N6-acetyllysine mark is found at lysine 114 and lysine 156. Positions 415 and 422 each coordinate Mg(2+).

It belongs to the class-II aminoacyl-tRNA synthetase family. Homodimer. Mg(2+) serves as cofactor.

The protein resides in the cytoplasm. The catalysed reaction is tRNA(Lys) + L-lysine + ATP = L-lysyl-tRNA(Lys) + AMP + diphosphate. The sequence is that of Lysine--tRNA ligase, heat inducible (lysU) from Escherichia coli O6:H1 (strain CFT073 / ATCC 700928 / UPEC).